The following is a 317-amino-acid chain: HTH-type transcriptional repressor PA14_22550 (317 aa).

An HTH lysR-type domain is found at 1–59; it reads MDKLTAMATFVKVVDAGSFTRAADALGLPKARVSQRVSDLEKHLGVRLLNRTTRALSLT. The segment at residues 19–38 is a DNA-binding region (H-T-H motif); that stretch reads FTRAADALGLPKARVSQRVS.

It belongs to the LysR transcriptional regulatory family.

Functionally, represses the transcription of the operon that consists of PA14_22510 to PA14_22540. The protein is HTH-type transcriptional repressor PA14_22550 of Pseudomonas aeruginosa (strain UCBPP-PA14).